Here is a 166-residue protein sequence, read N- to C-terminus: Ribosome maturation factor RimM (166 aa).

Positions 90-163 (EGQYFIKDII…KIVIKAVEEW (74 aa)) constitute a PRC barrel domain.

This sequence belongs to the RimM family. Binds ribosomal protein uS19.

It is found in the cytoplasm. An accessory protein needed during the final step in the assembly of 30S ribosomal subunit, possibly for assembly of the head region. Essential for efficient processing of 16S rRNA. May be needed both before and after RbfA during the maturation of 16S rRNA. It has affinity for free ribosomal 30S subunits but not for 70S ribosomes. This chain is Ribosome maturation factor RimM, found in Clostridium acetobutylicum (strain ATCC 824 / DSM 792 / JCM 1419 / IAM 19013 / LMG 5710 / NBRC 13948 / NRRL B-527 / VKM B-1787 / 2291 / W).